A 369-amino-acid polypeptide reads, in one-letter code: 4-hydroxy-3-methylbut-2-en-1-yl diphosphate synthase (flavodoxin) (369 aa).

[4Fe-4S] cluster-binding residues include Cys-270, Cys-273, Cys-305, and Glu-312.

This sequence belongs to the IspG family. [4Fe-4S] cluster is required as a cofactor.

The enzyme catalyses (2E)-4-hydroxy-3-methylbut-2-enyl diphosphate + oxidized [flavodoxin] + H2O + 2 H(+) = 2-C-methyl-D-erythritol 2,4-cyclic diphosphate + reduced [flavodoxin]. The protein operates within isoprenoid biosynthesis; isopentenyl diphosphate biosynthesis via DXP pathway; isopentenyl diphosphate from 1-deoxy-D-xylulose 5-phosphate: step 5/6. Converts 2C-methyl-D-erythritol 2,4-cyclodiphosphate (ME-2,4cPP) into 1-hydroxy-2-methyl-2-(E)-butenyl 4-diphosphate. The protein is 4-hydroxy-3-methylbut-2-en-1-yl diphosphate synthase (flavodoxin) of Pseudomonas savastanoi pv. phaseolicola (strain 1448A / Race 6) (Pseudomonas syringae pv. phaseolicola (strain 1448A / Race 6)).